The primary structure comprises 293 residues: Shikimate dehydrogenase (NADP(+)) (293 aa).

Shikimate is bound by residues 26-28 and threonine 73; that span reads SKS. Catalysis depends on lysine 77, which acts as the Proton acceptor. Glutamate 89 is a binding site for NADP(+). 2 residues coordinate shikimate: asparagine 98 and aspartate 113. NADP(+) contacts are provided by residues 137–141, 161–166, and isoleucine 231; these read GAGGA and NRTRQR. Tyrosine 233 lines the shikimate pocket. Residue glycine 254 participates in NADP(+) binding.

Belongs to the shikimate dehydrogenase family. In terms of assembly, homodimer.

The enzyme catalyses shikimate + NADP(+) = 3-dehydroshikimate + NADPH + H(+). It participates in metabolic intermediate biosynthesis; chorismate biosynthesis; chorismate from D-erythrose 4-phosphate and phosphoenolpyruvate: step 4/7. Involved in the biosynthesis of the chorismate, which leads to the biosynthesis of aromatic amino acids. Catalyzes the reversible NADPH linked reduction of 3-dehydroshikimate (DHSA) to yield shikimate (SA). The protein is Shikimate dehydrogenase (NADP(+)) of Bartonella quintana (strain Toulouse) (Rochalimaea quintana).